The primary structure comprises 216 residues: Thiopurine S-methyltransferase (216 aa).

S-adenosyl-L-methionine contacts are provided by Trp11, Leu46, Glu67, and Arg122.

Belongs to the class I-like SAM-binding methyltransferase superfamily. TPMT family.

It localises to the cytoplasm. It carries out the reaction S-adenosyl-L-methionine + a thiopurine = S-adenosyl-L-homocysteine + a thiopurine S-methylether.. This Vibrio parahaemolyticus serotype O3:K6 (strain RIMD 2210633) protein is Thiopurine S-methyltransferase.